The chain runs to 432 residues: Calcium uptake protein 2, mitochondrial (432 aa).

Residues 1-22 (MAAAAGRSAWLAAWGGRLRRGL) constitute a mitochondrion transit peptide. Residues 169–204 (KPHSGFHVAFKMLDVDGNEMIERKEFVRLQKIISKQ) enclose the EF-hand 1 domain. Ca(2+)-binding residues include aspartate 182, aspartate 184, asparagine 186, methionine 188, glutamate 190, and glutamate 193. Serine 202 carries the post-translational modification Phosphoserine. One can recognise an EF-hand 2; degenerate domain in the interval 224-259 (EPGVNTTLQVRFFGKRGEKKLHYKEFRRFVENLQTE). The EF-hand 3; degenerate domain maps to 290-325 (TENKDIYWRNVREKLSVGESISLDEFKSFCHFTTHL). An EF-hand 4 domain is found at 359–394 (LSDNLLDTVFKIFDLDGDECLSHGEFLGVLKNRMHR). Ca(2+)-binding residues include aspartate 372, aspartate 374, aspartate 376, cysteine 378, and glutamate 383.

Belongs to the MICU1 family. MICU2 subfamily. As to quaternary structure, heterodimer; disulfide-linked; heterodimerizes with MICU1. Component of the uniplex complex, composed of MCU, EMRE/SMDT1, MICU1 and MICU2 in a 4:4:1:1 stoichiometry.

The protein localises to the mitochondrion intermembrane space. It is found in the mitochondrion inner membrane. Calcium sensor of the mitochondrial calcium uniporter (MCU) channel, which senses calcium level via its EF-hand domains. MICU1 and MICU2 form a disulfide-linked heterodimer that stimulates and inhibits MCU activity, depending on the concentration of calcium. At low calcium levels, MICU1 occludes the pore of the MCU channel, preventing mitochondrial calcium uptake. At higher calcium levels, calcium-binding to MICU1 and MICU2 induces a conformational change that weakens MCU-MICU1 interactions and moves the MICU1-MICU2 heterodimer away from the pore, allowing calcium permeation through the MCU channel. The chain is Calcium uptake protein 2, mitochondrial (Micu2) from Rattus norvegicus (Rat).